A 1434-amino-acid chain; its full sequence is Inositol hexakisphosphate and diphosphoinositol-pentakisphosphate kinase 1 (1434 aa).

Residue 66 to 67 (KK) participates in substrate binding. Residues Arg-147, Lys-200, His-207, Arg-226, 250–253 (EEFM), and 259–261 (DVK) each bind ATP. 226–227 (RK) contacts substrate. Positions 261 and 275 each coordinate substrate. Residues Ser-277, Asp-322, and 334 to 336 (DVN) contribute to the ATP site. 339 to 342 (SFVK) lines the substrate pocket. The tract at residues 384 to 455 (PTTSGTMMEL…VLDITRLLLA (72 aa)) is polyphosphoinositide-binding domain. Positions 916 to 1017 (EGSAPAGCGF…PTEMKQSGLG (102 aa)) are disordered. Phosphoserine is present on residues Ser-941 and Ser-984. The segment covering 1002 to 1017 (FSSSRPPTEMKQSGLG) has biased composition (polar residues). A phosphoserine mark is found at Ser-1034, Ser-1070, Ser-1142, and Ser-1149. Disordered regions lie at residues 1133 to 1193 (NHQA…GFSD), 1228 to 1251 (ESTQ…DTEV), and 1396 to 1434 (TDNP…EDIS). Residues 1165–1183 (SSGPSSTVSSAGPSSPTTV) are compositionally biased toward low complexity. Positions 1403–1434 (LSEETDLQAQEVSEEIDQEPEVVDELSNEDIS) are enriched in acidic residues.

This sequence belongs to the histidine acid phosphatase family. VIP1 subfamily.

The protein localises to the cytoplasm. It is found in the cytosol. Its subcellular location is the cell membrane. The enzyme catalyses 1D-myo-inositol hexakisphosphate + ATP = 1-diphospho-1D-myo-inositol 2,3,4,5,6-pentakisphosphate + ADP. The catalysed reaction is 5-diphospho-1D-myo-inositol 1,2,3,4,6-pentakisphosphate + ATP + H(+) = 1,5-bis(diphospho)-1D-myo-inositol 2,3,4,6-tetrakisphosphate + ADP. Its function is as follows. Bifunctional inositol kinase that acts in concert with the IP6K kinases IP6K1, IP6K2 and IP6K3 to synthesize the diphosphate group-containing inositol pyrophosphates diphosphoinositol pentakisphosphate, PP-InsP5, and bis-diphosphoinositol tetrakisphosphate, (PP)2-InsP4. PP-InsP5 and (PP)2-InsP4, also respectively called InsP7 and InsP8, regulate a variety of cellular processes, including apoptosis, vesicle trafficking, cytoskeletal dynamics, exocytosis, insulin signaling and neutrophil activation. Phosphorylates inositol hexakisphosphate (InsP6) at position 1 to produce PP-InsP5 which is in turn phosphorylated by IP6Ks to produce (PP)2-InsP4. Alternatively, phosphorylates PP-InsP5 at position 1, produced by IP6Ks from InsP6, to produce (PP)2-InsP4. Activated when cells are exposed to hyperosmotic stress. This chain is Inositol hexakisphosphate and diphosphoinositol-pentakisphosphate kinase 1, found in Rattus norvegicus (Rat).